A 691-amino-acid chain; its full sequence is Elongation factor G (691 aa).

The 276-residue stretch at 6-281 (SKYRNIGIMA…GVVDFLPSPI (276 aa)) folds into the tr-type G domain. Residues 15–22 (AHIDAGKT), 79–83 (DTPGH), and 133–136 (NKMD) each bind GTP.

It belongs to the TRAFAC class translation factor GTPase superfamily. Classic translation factor GTPase family. EF-G/EF-2 subfamily.

It localises to the cytoplasm. Functionally, catalyzes the GTP-dependent ribosomal translocation step during translation elongation. During this step, the ribosome changes from the pre-translocational (PRE) to the post-translocational (POST) state as the newly formed A-site-bound peptidyl-tRNA and P-site-bound deacylated tRNA move to the P and E sites, respectively. Catalyzes the coordinated movement of the two tRNA molecules, the mRNA and conformational changes in the ribosome. In Wolbachia pipientis wMel, this protein is Elongation factor G.